The chain runs to 164 residues: Large ribosomal subunit protein bL19 (164 aa).

The segment at 144–164 (EAEKQTEVQAEPKIEKSEEKK) is disordered.

This sequence belongs to the bacterial ribosomal protein bL19 family.

Its function is as follows. This protein is located at the 30S-50S ribosomal subunit interface and may play a role in the structure and function of the aminoacyl-tRNA binding site. The polypeptide is Large ribosomal subunit protein bL19 (Pelagibacter ubique (strain HTCC1062)).